We begin with the raw amino-acid sequence, 589 residues long: Capsid scaffolding protein (589 aa).

Catalysis depends on charge relay system residues histidine 47, serine 118, and histidine 142. Over residues glutamate 264–glutamine 273 the composition is skewed to basic and acidic residues. Residues glutamate 264–histidine 283 form a disordered region. An interaction with pAP region spans residues histidine 307–proline 326. Disordered regions lie at residues arginine 421–tyrosine 478 and alanine 514–glycine 552. Short sequence motifs (nuclear localization signal) lie at residues lysine 428–arginine 433 and lysine 453–lysine 459. Basic residues predominate over residues lysine 453–histidine 462. Residues alanine 514–serine 543 show a composition bias toward low complexity. An interaction with major capsid protein region spans residues proline 569–glutamate 589.

The protein belongs to the herpesviridae capsid scaffolding protein family. As to quaternary structure, homomultimer. Interacts with major capsid protein. Exists in a monomer-dimer equilibrium with the dimer being the active species. Post-translationally, capsid scaffolding protein is cleaved by assemblin after formation of the spherical procapsid. As a result, the capsid obtains its mature, icosahedral shape. Cleavages occur at two or more sites: release (R-site) and maturation (M-site).

The protein resides in the host cytoplasm. The protein localises to the host nucleus. It catalyses the reaction Cleaves -Ala-|-Ser- and -Ala-|-Ala- bonds in the scaffold protein.. Acts as a scaffold protein by binding major capsid protein in the cytoplasm, inducing the nuclear localization of both proteins. Multimerizes in the nucleus such as major capsid protein forms the icosahedral T=16 capsid. Autocatalytic cleavage releases the assembly protein, and subsequently abolishes interaction with major capsid protein. Cleavages products are evicted from the capsid before or during DNA packaging. Its function is as follows. Protease that plays an essential role in virion assembly within the nucleus. Catalyzes the cleavage of the assembly protein after formation of the spherical procapsid. By that cleavage, the capsid matures and gains its icosahedral shape. The cleavage sites seem to include -Ala-Ser-, -Ala-Ala-, as well as Ala-Thr bonds. Assemblin and cleavages products are evicted from the capsid before or during DNA packaging. Functionally, plays a major role in capsid assembly. Acts as a scaffold protein by binding major capsid protein. Multimerizes in the nucleus such as major capsid protein forms the icosahedral T=16 capsid. Cleaved by assemblin after capsid completion. The cleavages products are evicted from the capsid before or during DNA packaging. The sequence is that of Capsid scaffolding protein (UL80) from Simian cytomegalovirus (strain Colburn).